The sequence spans 243 residues: UPF0246 protein SpyM51747 (243 aa).

Belongs to the UPF0246 family.

This is UPF0246 protein SpyM51747 from Streptococcus pyogenes serotype M5 (strain Manfredo).